Consider the following 114-residue polypeptide: Fumarate reductase subunit D (114 aa).

3 consecutive transmembrane segments (helical) span residues 24-44, 50-70, and 92-112; these read VSAI…PFGL, LITF…TIFP, and GGFI…FAVI.

Belongs to the FrdD family. In terms of assembly, part of an enzyme complex containing four subunits: a flavoprotein (FrdA), an iron-sulfur protein (FrdB), and two hydrophobic anchor proteins (FrdC and FrdD).

Its subcellular location is the cell inner membrane. Anchors the catalytic components of the fumarate reductase complex to the cell membrane, binds quinones. The protein is Fumarate reductase subunit D of Haemophilus influenzae (strain PittGG).